Reading from the N-terminus, the 160-residue chain is Oligoribonuclease (160 aa).

Residues 8–158 (LIWIDLEMTG…YNKLKKKTLI (151 aa)) enclose the Exonuclease domain. The active site involves Y129.

This sequence belongs to the oligoribonuclease family.

Its subcellular location is the cytoplasm. 3'-to-5' exoribonuclease specific for small oligoribonucleotides. The polypeptide is Oligoribonuclease (orn) (Buchnera aphidicola subsp. Baizongia pistaciae (strain Bp)).